Reading from the N-terminus, the 530-residue chain is Phosphoenolpyruvate carboxykinase (ATP) (530 aa).

The substrate site is built by Arg58, Tyr195, and Lys201. Residues Lys201, His220, and 236–244 (GLSGTGKTT) each bind ATP. Positions 201 and 220 each coordinate Mn(2+). Asp257 serves as a coordination point for Mn(2+). ATP is bound by residues Glu285, Arg321, 440 to 441 (RI), and Thr446. A substrate-binding site is contributed by Arg321.

Belongs to the phosphoenolpyruvate carboxykinase (ATP) family. Mn(2+) is required as a cofactor.

It is found in the cytoplasm. It carries out the reaction oxaloacetate + ATP = phosphoenolpyruvate + ADP + CO2. Its pathway is carbohydrate biosynthesis; gluconeogenesis. In terms of biological role, involved in the gluconeogenesis. Catalyzes the conversion of oxaloacetate (OAA) to phosphoenolpyruvate (PEP) through direct phosphoryl transfer between the nucleoside triphosphate and OAA. The sequence is that of Phosphoenolpyruvate carboxykinase (ATP) from Staphylococcus epidermidis (strain ATCC 12228 / FDA PCI 1200).